The following is a 217-amino-acid chain: Glutathione S-transferase U20 (217 aa).

Residues 3-82 (NLPILLDYWP…YVDEAWPEKN (80 aa)) form the GST N-terminal domain. Glutathione contacts are provided by serine 13, isoleucine 54, and serine 67. One can recognise a GST C-terminal domain in the interval 88–208 (DPYGRAQARF…LPDSEKIVAY (121 aa)).

This sequence belongs to the GST superfamily. Tau family. As to quaternary structure, homodimerization. Interacts with JAR1/FIN219 under continuous far red (cFR) light to stimulate JAR1/FIN219 activity and substrate selectivity. As to expression, mostly associated with vascular tissues, especially near hydathodes.

It localises to the nucleus. It is found in the cytoplasm. The protein resides in the cytosol. The catalysed reaction is RX + glutathione = an S-substituted glutathione + a halide anion + H(+). Activated by JAR1/FIN219. Functionally, exhibits glutathione-dependent thiol transferase activities. Can use glutathione (GSH) and 1-chloro-2,4-dinitrobenzene (CDNB) as substrates. Involved in the regulation of far-red light influence on development. Regulator of the interplay between light and JA signaling by increasing JAR1/FIN219 efficiency. Maybe involved in gravitropic signal transduction. This Arabidopsis thaliana (Mouse-ear cress) protein is Glutathione S-transferase U20.